Consider the following 201-residue polypeptide: Small ribosomal subunit protein uS4 (201 aa).

One can recognise an S4 RNA-binding domain in the interval 91–157 (SRLDNVVYRA…VPFQIARETA (67 aa)).

It belongs to the universal ribosomal protein uS4 family. Part of the 30S ribosomal subunit. Contacts protein S5. The interaction surface between S4 and S5 is involved in control of translational fidelity.

Functionally, one of the primary rRNA binding proteins, it binds directly to 16S rRNA where it nucleates assembly of the body of the 30S subunit. Its function is as follows. With S5 and S12 plays an important role in translational accuracy. The chain is Small ribosomal subunit protein uS4 from Mycolicibacterium paratuberculosis (strain ATCC BAA-968 / K-10) (Mycobacterium paratuberculosis).